A 681-amino-acid polypeptide reads, in one-letter code: RNA polymerase sigma factor RpoD (681 aa).

2 disordered regions span residues 1 to 60 (MKKK…ETAK) and 239 to 270 (DDDENSVSDPKKDDDSEEDEENEERKKVVSEK). Over residues 261-270 (EERKKVVSEK) the composition is skewed to basic and acidic residues. Residues 446 to 516 (MAKSNLRLVV…SRAIADQART (71 aa)) are sigma-70 factor domain-2. Residues 470–473 (DLIQ) carry the Interaction with polymerase core subunit RpoC motif. The segment at 525–601 (DTINRINKVM…DKNIVSSIDH (77 aa)) is sigma-70 factor domain-3. The tract at residues 614-668 (VLDQLNEREKAVIRMRFGLLDDESDRTLEEIGKELNVTRERVRQIESSAIKKLRS) is sigma-70 factor domain-4. The H-T-H motif DNA-binding region spans 641-660 (LEEIGKELNVTRERVRQIES).

It belongs to the sigma-70 factor family. RpoD/SigA subfamily. As to quaternary structure, interacts transiently with the RNA polymerase catalytic core.

The protein resides in the cytoplasm. Sigma factors are initiation factors that promote the attachment of RNA polymerase to specific initiation sites and are then released. This sigma factor is the primary sigma factor during exponential growth. The sequence is that of RNA polymerase sigma factor RpoD from Helicobacter pylori (strain J99 / ATCC 700824) (Campylobacter pylori J99).